The sequence spans 3133 residues: Probable polyketide synthase 38 (3133 aa).

Residues 9–440 (DDDVAVIGIG…GSNVCLILSE (432 aa)) form the Ketosynthase family 3 (KS3) domain. Catalysis depends on for beta-ketoacyl synthase activity residues Cys181, His320, and His363. The interval 647–680 (GVSADIIIGHSLGEISSAYCSGMIDFQTLCYLTY) is acyl/malonyl transferase. The For acyl/malonyl transferase activity role is filled by Ser657. An N-terminal hotdog fold region spans residues 945–1067 (GPSIHSLGNN…GNFSLSKHNI (123 aa)). Positions 945–1248 (GPSIHSLGNN…CTIVASNPDS (304 aa)) constitute a PKS/mFAS DH domain. The Proton acceptor; for dehydratase activity role is filled by His979. A C-terminal hotdog fold region spans residues 1083–1248 (NFTCISKQDL…CTIVASNPDS (166 aa)). Catalysis depends on Asp1155, which acts as the Proton donor; for dehydratase activity. The segment at 1370–1408 (NNNNNNNNNNNNNNNNNNNNNNNNNNNNNNNNNDNDNDN) is disordered. In terms of domain architecture, Carrier spans 2562–2639 (NNNEIIRSTI…QSIEIIKSAH (78 aa)). An O-(pantetheine 4'-phosphoryl)serine modification is found at Ser2599. A coiled-coil region spans residues 2649 to 2711 (NNNNSNHHDN…NNNNNNNNNN (63 aa)). Disordered stretches follow at residues 2691-2715 (LNNNNNNNNNNNNNNNNNNNNNNNN) and 2794-2817 (GNISNDKLNSSNSNSDNSNNNNNQ). Low complexity-rich tracts occupy residues 2692–2715 (NNNNNNNNNNNNNNNNNNNNNNNN) and 2795–2817 (NISNDKLNSSNSNSDNSNNNNNQ).

Pantetheine 4'-phosphate is required as a cofactor.

Functionally, probable polyketide synthase. This Dictyostelium discoideum (Social amoeba) protein is Probable polyketide synthase 38 (pks38).